The sequence spans 420 residues: C-methyltransferase NovU (420 aa).

The protein belongs to the methyltransferase superfamily.

It functions in the pathway antibiotic biosynthesis; novobiocin biosynthesis. Functionally, C-methyltransferase that acts together with NovW to catalyze the formation of dTDP-4-keto-6-deoxy-5-C-methyl-L-lyxo-hexose from dTDP-4-keto-6-deoxy-D-glucose in the novobiocin biosynthesis pathway, an aminocoumarin family antibiotic that targets bacterial DNA gyrases. The sequence is that of C-methyltransferase NovU (novU) from Streptomyces niveus (Streptomyces spheroides).